The following is a 450-amino-acid chain: Protein tweety homolog 1 (450 aa).

Over Met1 to Ala43 the chain is Extracellular. A helical membrane pass occupies residues Leu44 to Val64. At Tyr65 to Gly88 the chain is on the cytoplasmic side. A helical transmembrane segment spans residues Cys89 to Phe109. Over Tyr110 to Trp214 the chain is Extracellular. Asn130 carries an N-linked (GlcNAc...) asparagine glycan. A helical transmembrane segment spans residues Leu215–Leu235. Residues Ala236 to Lys240 are Cytoplasmic-facing. The chain crosses the membrane as a helical span at residues Trp241–Met261. Topologically, residues Gly262–Glu390 are extracellular. N-linked (GlcNAc...) asparagine glycans are attached at residues Asn284 and Asn355. Cys303 and Cys370 are joined by a disulfide. The helical transmembrane segment at Gly391–Cys411 threads the bilayer. Residues Ser412–Ile450 lie on the Cytoplasmic side of the membrane. The segment at Asp428 to Ile450 is disordered. Ser440 is modified (phosphoserine).

Belongs to the tweety family. In terms of assembly, homotetramer; disulfide-linked. Homodimer. Post-translationally, N-glycosylated. Contains high-mannose, hybrid and complex oligosaccharides.

It localises to the cell membrane. It carries out the reaction chloride(in) = chloride(out). The catalysed reaction is L-glutamate(out) = L-glutamate(in). Calcium-independent, swelling-dependent volume-regulated anion channel (VRAC-swell) which plays a pivotal role in the process of regulatory volume decrease (RVD) in the brain through the efflux of anions like chloride and organic osmolytes like glutamate. This chain is Protein tweety homolog 1 (TTYH1), found in Macaca fascicularis (Crab-eating macaque).